The chain runs to 615 residues: Alpha-terpinene synthase TPS33PK, chloroplastic (615 aa).

A chloroplast-targeting transit peptide spans 1–33; the sequence is MFCRLGVHQFSPLSLILNTTKLARASTLSSACY. (2E)-geranyl diphosphate is bound by residues glutamate 334, valine 371, leucine 375, leucine 513, and serine 516. The Mg(2+) site is built by valine 371 and leucine 375. Positions 371 to 375 match the DDXXD motif motif; the sequence is VYGTL. Serine 516, methionine 520, and aspartate 524 together coordinate Mg(2+).

The protein belongs to the terpene synthase family. Tpsb subfamily. Mg(2+) is required as a cofactor. Mn(2+) serves as cofactor.

The protein resides in the plastid. It is found in the chloroplast. The catalysed reaction is (2E)-geranyl diphosphate = alpha-terpinene + diphosphate. It catalyses the reaction (2E)-geranyl diphosphate = gamma-terpinene + diphosphate. Its pathway is secondary metabolite biosynthesis; terpenoid biosynthesis. In terms of biological role, involved in monoterpene (C10) olefins biosynthesis, constituants of cannabinoids and terpenoids-rich resins. Catalyzes mainly the conversion of (2E)-geranyl diphosphate to alpha-terpinene and gamma-terpinene. The chain is Alpha-terpinene synthase TPS33PK, chloroplastic from Cannabis sativa (Hemp).